Consider the following 325-residue polypeptide: Beta-ketoacyl-[acyl-carrier-protein] synthase III (325 aa).

Residues cysteine 112 and histidine 250 contribute to the active site. Residues 251–255 (QANSR) form an ACP-binding region. Residue asparagine 280 is part of the active site.

The protein belongs to the thiolase-like superfamily. FabH family. Homodimer.

Its subcellular location is the cytoplasm. The enzyme catalyses malonyl-[ACP] + acetyl-CoA + H(+) = 3-oxobutanoyl-[ACP] + CO2 + CoA. It functions in the pathway lipid metabolism; fatty acid biosynthesis. Its function is as follows. Catalyzes the condensation reaction of fatty acid synthesis by the addition to an acyl acceptor of two carbons from malonyl-ACP. Catalyzes the first condensation reaction which initiates fatty acid synthesis and may therefore play a role in governing the total rate of fatty acid production. Possesses both acetoacetyl-ACP synthase and acetyl transacylase activities. Its substrate specificity determines the biosynthesis of branched-chain and/or straight-chain of fatty acids. The protein is Beta-ketoacyl-[acyl-carrier-protein] synthase III of Lactococcus lactis subsp. cremoris (strain MG1363).